The following is a 481-amino-acid chain: MLLKLYNTKTKSLSDIKNFSDTKVYACGPTVYNYAHIGNLRTYIFEDLLIKSLRLLKYNVNYAMNITDIGHLTGDFDEGEDKVVKAARERGLTVYEISRFFTEAFFDDCAKLNIVYPDKVLVASEYIASMIEVVKVLEQNGFTYFVNGNVYFDTSRFNGYGQMAGINLNNFGRSSVSRVEIDLSKKNKSDFVLWFTNSKFKDQEMKWDSPWGFGYPSWHLECAAMNLDYFKSTLDIHLGGVDHVGVHHINEIAIAECYLNKMWCDMFVHGEFLIMEDEKMSKSNNNFITIKDLESDGFSPLDFRYFCLTAHYRTQLKFTFSNLRACKIARENMLNKLTFFYSSLSQFDMALLNKNCENIESVSENKYYNNFLEKIAFDLSIPQALALLWDIVKDDDLSALLKLLLAFKFDEVLSLGLKEGVLREIERDRVNIDDTMHSLIEERRLAKLRKDFKRADEIREYFRSKGFVLIDTEEGTKVKRG.

Cys27 lines the Zn(2+) pocket. Positions 29-39 match the 'HIGH' region motif; the sequence is PTVYNYAHIGN. The Zn(2+) site is built by Cys222, His247, and Glu251. A 'KMSKS' region motif is present at residues 279-283; the sequence is KMSKS. Position 282 (Lys282) interacts with ATP.

Belongs to the class-I aminoacyl-tRNA synthetase family. In terms of assembly, monomer. The cofactor is Zn(2+).

The protein resides in the cytoplasm. It carries out the reaction tRNA(Cys) + L-cysteine + ATP = L-cysteinyl-tRNA(Cys) + AMP + diphosphate. The polypeptide is Cysteine--tRNA ligase (Borrelia hermsii (strain HS1 / DAH)).